The chain runs to 133 residues: Protransforming growth factor alpha (133 aa).

A signal peptide spans 1 to 23 (MVPSAGQLALFALGIFLAVCQAL). Residues 24 to 38 (ENSTSALSDPPVAAA) constitute a propeptide, removed in mature form. Over 24–97 (ENSTSALSDP…AVVAASQKKQ (74 aa)) the chain is Extracellular. N-linked (GlcNAc...) asparagine glycosylation occurs at Asn25. The EGF-like domain maps to 42–82 (HFNDCPDSHTQFCFHGTCRFLLQEEKPACVCHSGYVGARCE). Cystine bridges form between Cys46/Cys59, Cys54/Cys70, and Cys72/Cys81. Positions 89–133 (VVAASQKKQAITALVVVTIVALAVLIITCVLIHCCEVRKHSVVVP) are cleaved as a propeptide — removed in mature form. A helical membrane pass occupies residues 98 to 120 (AITALVVVTIVALAVLIITCVLI). Over 121–133 (HCCEVRKHSVVVP) the chain is Cytoplasmic.

Interacts with the PDZ domains of MAGI3, SDCBP and SNTA1. The interaction with SDCBP, is required for the targeting to the cell surface. In the endoplasmic reticulum, in its immature form (i.e. with a prosegment and lacking full N-glycosylation), interacts with CNIH. In the Golgi apparatus, may form a complex with CNIH and GORASP2. Interacts (via cytoplasmic C-terminal domain) with NKD2. As to expression, skin.

Its subcellular location is the secreted. It is found in the extracellular space. It localises to the cell membrane. In terms of biological role, TGF alpha is a mitogenic polypeptide that is able to bind to the EGF receptor/EGFR and to act synergistically with TGF beta to promote anchorage-independent cell proliferation in soft agar. This chain is Protransforming growth factor alpha (TGFA), found in Ovis aries (Sheep).